Reading from the N-terminus, the 93-residue chain is LSM complex subunit LSM5 (93 aa).

The Sm domain occupies Leu7 to Lys87.

Belongs to the snRNP Sm proteins family. As to quaternary structure, component of the heptameric LSM1-LSM7 complex that forms a seven-membered ring structure with a donut shape. The LSm subunits are arranged in the order LSM1, LSM2, LSM3, LSM6, LSM5, LSM7 and LSM4. Except for LSM1, where a C-terminal helix crosses the ring structure to form additional interactions with LSM3 and LSM6, each subunit interacts only with its two neighboring subunits. The LSM1-LSM7 complex interacts with PAT1; within the complex PAT1 has direct interactions with LSM2 and LSM3. The LSM1-LSM7 complex interacts with XRN1. Component of the heptameric LSM2-LSM8 complex that forms a seven-membered ring structure with a donut shape; an RNA strand can pass through the hole in the center of the ring structure. The LSm subunits are arranged in the order LSM8, LSM2, LSM3, LSM6, LSM5, LSM7 and LSM4. Component of the spliceosome U4/U6-U5 tri-snRNP complex composed of the U4, U6 and U5 snRNAs and at least PRP3, PRP4, PRP6, PRP8, PRP18, PRP31, PRP38, SNU13, SNU23, SNU66, SNU114, SPP381, SMB1, SMD1, SMD2, SMD3, SMX2, SMX3, LSM2, LSM3, LSM4, LSM5, LSM6, LSM7, LSM8, BRR2 and DIB1. May be found in a complex comprising LSM2-LSM7 without LSM1 or LSM8; the complex associates with pre-P RNA and snoRNA SNR5.

The protein resides in the nucleus. It localises to the nucleolus. It is found in the cytoplasm. Its function is as follows. Component of LSm protein complexes, which are involved in RNA processing and may function in a chaperone-like manner. Component of the cytoplasmic LSM1-LSM7 complex which is involved in mRNA degradation by activating the decapping step. Together with PAT1, the LSM1-LSM7 complex binds to osmotic stress-activated mRNAs to attenuate the osmotic stress response, probably by limiting ribosome access to the mRNA and consequently translation. Component of the nuclear LSM2-LSM8 complex, which is involved in spliceosome assembly. The LSM2-LSM8 complex plays a role in the biogenesis of the spliceosomal U4/U6-U5 tri-snRNP complex by accelerating PRP24-mediated annealing of U4/U6 di-snRNA. The LSM2-LSM8 complex binds U6 snRNA terminating with a non-cyclic 3' phosphate group. LSM2-LSM8 is probably also involved in degradation of nuclear pre-mRNA by targeting them for decapping. LSM2-LSM8 could be involved in processing of pre-tRNAs, pre-rRNAs and U3 snoRNA, although involvement may be indirect. In a complex that probably contains LSM2-LSM7, but not LSM1 or LSM8, associates with the precursor of the RNA component of RNase P (pre-P RNA) and may be involved in maturing pre-P RNA; the complex also associates with snoRNA SNR5. The sequence is that of LSM complex subunit LSM5 (LSM5) from Saccharomyces cerevisiae (strain ATCC 204508 / S288c) (Baker's yeast).